We begin with the raw amino-acid sequence, 648 residues long: EF-hand domain-containing protein 1 (648 aa).

The required for its localization in the mitotic spindle and interaction with alpha-tubulin stretch occupies residues 1–45 (MGTNPVHGLPFLPGSSFTDSTKTAFHRSQTLNYRNGYAVVRRPTM). DM10 domains are found at residues 93–198 (DKKV…ESQG), 239–359 (DKQV…KDKF), and 416–520 (DNKV…ESNA). The EF-hand domain maps to 582-617 (SYKENLRETFQMYDKDESGYVDRETFFKICETLNVP).

In terms of assembly, microtubule inner protein component of sperm flagellar doublet microtubules. Interacts with the C-terminus of CACNA1E. Interacts with alpha-tubulin. In terms of tissue distribution, expressed in adult brain including hippocampus, cerebellum, cerebral cortex, thalamus, hypothalamus, amygdala and upper brainstem. Expressed in soma and dentrites of pyramidal neurons of the hippocampal CA1 region, pyramidal neurons of the cerebral cortex and Purkinje cells of cerebellum. Highly expressed in testis, trachea, and oviduct, moderately in lung, and slightly in brain. Highly expressed in sperm flagella and tracheal cilia (at protein level).

It localises to the cytoplasm. The protein resides in the cytoskeleton. The protein localises to the cilium axoneme. Its subcellular location is the flagellum axoneme. It is found in the microtubule organizing center. It localises to the centrosome. The protein resides in the spindle. The protein localises to the spindle pole. Microtubule inner protein (MIP) part of the dynein-decorated doublet microtubules (DMTs) in cilia axoneme, which is required for motile cilia beating. Microtubule-associated protein which regulates cell division and neuronal migration during cortical development. Necessary for radial and tangential cell migration during brain development, possibly acting as a regulator of cell morphology and process formation during migration. May enhance calcium influx through CACNA1E and stimulate programmed cell death. Overexpression of EFHC1 in hippocampal primary culture neurons induced apoptosis. This is EF-hand domain-containing protein 1 (Efhc1) from Mus musculus (Mouse).